The sequence spans 301 residues: UBX domain-containing protein 2 (301 aa).

Positions 1-61 are disordered; sequence MSRNIRTFRD…AARGPDSEAH (61 aa). Residues 89 to 153 form the SEP domain; that stretch reads TISLTLHLWS…KVNRHHEEYV (65 aa). The disordered stretch occupies residues 176–200; that stretch reads GQSSSSATTAGTSSATTDHNPDHTA. Positions 178–192 are enriched in low complexity; it reads SSSSATTAGTSSATT. In terms of domain architecture, UBX spans 218-295; sequence MNEPTTNIQI…NVLNSVVAVK (78 aa).

This sequence belongs to the NSFL1C family. As to quaternary structure, interacts with cdc-48.1 (via N-terminus) and cdc-48.2 (via N-terminus). Interacts with kinase air-1. Expressed in the germline (at protein level). Expressed in spermatocytes but not in mature sperm (at protein level). Ubiquitously expressed. Predominantly expressed in the spermatheca.

Its subcellular location is the cytoplasm. The protein localises to the perinuclear region. The protein resides in the nucleus. It is found in the cytoskeleton. It localises to the microtubule organizing center. Its subcellular location is the centrosome. Functionally, ubiquitin-binding protein which acts as an adapter for ATPase cdc-48.1 and/or cdc-48.2, conferring substrate specificity. Together with ubxn-2 and ubxn-3, plays a role in hermaphrodite spermatogenesis probably by promoting the degradation of sex determination terminal factor tra-1. Probably in association with ATPase cdc-48.1 or/and cdc-48.2, regulates the centrosomal levels of kinase air-1 levels during mitotic progression by promoting air-1 removal from centrosomes in prophase. Also, regulates spindle orientation in the one-cell embryo by controlling centration and rotation of the pronuclei-centrosome complex in prophase. In Caenorhabditis elegans, this protein is UBX domain-containing protein 2.